The primary structure comprises 517 residues: Bifunctional purine biosynthesis protein PurH (517 aa).

The 145-residue stretch at 1 to 145 (MSPLALVSVS…KNHKDVSVLV (145 aa)) folds into the MGS-like domain.

The protein belongs to the PurH family.

The catalysed reaction is (6R)-10-formyltetrahydrofolate + 5-amino-1-(5-phospho-beta-D-ribosyl)imidazole-4-carboxamide = 5-formamido-1-(5-phospho-D-ribosyl)imidazole-4-carboxamide + (6S)-5,6,7,8-tetrahydrofolate. It carries out the reaction IMP + H2O = 5-formamido-1-(5-phospho-D-ribosyl)imidazole-4-carboxamide. The protein operates within purine metabolism; IMP biosynthesis via de novo pathway; 5-formamido-1-(5-phospho-D-ribosyl)imidazole-4-carboxamide from 5-amino-1-(5-phospho-D-ribosyl)imidazole-4-carboxamide (10-formyl THF route): step 1/1. Its pathway is purine metabolism; IMP biosynthesis via de novo pathway; IMP from 5-formamido-1-(5-phospho-D-ribosyl)imidazole-4-carboxamide: step 1/1. In Prochlorococcus marinus (strain MIT 9312), this protein is Bifunctional purine biosynthesis protein PurH.